Reading from the N-terminus, the 314-residue chain is tRNA dimethylallyltransferase (314 aa).

8-15 (GPTGAGKS) is an ATP binding site. A substrate-binding site is contributed by 10–15 (TGAGKS).

It belongs to the IPP transferase family. In terms of assembly, monomer. It depends on Mg(2+) as a cofactor.

It catalyses the reaction adenosine(37) in tRNA + dimethylallyl diphosphate = N(6)-dimethylallyladenosine(37) in tRNA + diphosphate. Its function is as follows. Catalyzes the transfer of a dimethylallyl group onto the adenine at position 37 in tRNAs that read codons beginning with uridine, leading to the formation of N6-(dimethylallyl)adenosine (i(6)A). This is tRNA dimethylallyltransferase from Mycobacterium tuberculosis (strain ATCC 25177 / H37Ra).